The primary structure comprises 80 residues: Exodeoxyribonuclease 7 small subunit (80 aa).

The protein belongs to the XseB family. Heterooligomer composed of large and small subunits.

It is found in the cytoplasm. The enzyme catalyses Exonucleolytic cleavage in either 5'- to 3'- or 3'- to 5'-direction to yield nucleoside 5'-phosphates.. In terms of biological role, bidirectionally degrades single-stranded DNA into large acid-insoluble oligonucleotides, which are then degraded further into small acid-soluble oligonucleotides. The polypeptide is Exodeoxyribonuclease 7 small subunit (Pseudomonas fluorescens (strain Pf0-1)).